The sequence spans 300 residues: Probable alpha-L-glutamate ligase (300 aa).

In terms of domain architecture, ATP-grasp spans 104–287; the sequence is LQLLARQGID…IAGKMISWIE (184 aa). ATP is bound by residues Lys-141, 178 to 179, Asp-187, and 211 to 213; these read EY and RSN. Mg(2+)-binding residues include Asp-248, Glu-260, and Asn-262. Asp-248, Glu-260, and Asn-262 together coordinate Mn(2+).

It belongs to the RimK family. It depends on Mg(2+) as a cofactor. The cofactor is Mn(2+).

This is Probable alpha-L-glutamate ligase from Enterobacter sp. (strain 638).